A 117-amino-acid polypeptide reads, in one-letter code: Class I hydrophobin 2 (117 aa).

The N-terminal stretch at 1-21 (EIVSLSLSLLAVVPLVVLVIA) is a signal peptide. Disulfide bonds link cysteine 35–cysteine 96, cysteine 42–cysteine 90, cysteine 43–cysteine 76, and cysteine 97–cysteine 110.

Belongs to the fungal hydrophobin family. Self-assembles to form functional amyloid fibrils called rodlets. Self-assembly into fibrillar rodlets occurs spontaneously at hydrophobic:hydrophilic interfaces and the rodlets further associate laterally to form amphipathic monolayers.

It localises to the secreted. The protein localises to the cell wall. In terms of biological role, aerial growth, conidiation, and dispersal of filamentous fungi in the environment rely upon a capability of their secreting small amphipathic proteins called hydrophobins (HPBs) with low sequence identity. Class I can self-assemble into an outermost layer of rodlet bundles on aerial cell surfaces, conferring cellular hydrophobicity that supports fungal growth, development and dispersal; whereas Class II form highly ordered films at water-air interfaces through intermolecular interactions but contribute nothing to the rodlet structure. The chain is Class I hydrophobin 2 from Pisolithus tinctorius (Dead man's foot).